Here is a 1136-residue protein sequence, read N- to C-terminus: MRQLNYYIFISTILTYNLTHGQGPRPVIRVGITAALKTENGSIGWAYTGGAVPLALQYLKSHGYMLNFDFEFHVEYTECDLANTVRAGLNFMKTNNYDVIIGPPCAPALKMMGTLSTIYKKPVLGWGFVSESEISDMNRFPFVASVLPSTKTLGVVTSKLLEIYGWDRVALLYFKNELDYCSSVVNDVEKSLYNESKSVQIVMKAEIDGSNSESTSATLQVVKTRARVILFCAHAGGEKRFYLIQAGLLGMNSSEYVHVMLSMRSVGFGVQTSVGKKPLTLSGLPPIWESFTVNPDGMEDLAKSVAAKMIVIDTSSEVRDKTFLQYMTKNIVYAIREPPLSCKVPECLITNATGMGAYARHLFDVFYMYGMAVSSLNSTDPNVYGNLSLLIPKFTTAFEGMTGEVKLNEDLARKPLYQVYGLNSEYDQISLIDISLINDTVNVVFNYADGNTEVWHFWGGTRPPDTPVCGFLGKSCPLPIFEQYRALVIVAIAVTILILLAIIICMSSKIRNRRVEQSRLHSEWQIHAIKLRLPMHRRASKSSQESETESASETENFTSKSGDTMTSEFKETYTIQYLENDLVLTTAHQVQELSQAEMMKFVKLRKLDHENLNKFIGLSIDGSRFVSVWKMCSRGSLQDIISKGSFSMDYFFMFCMIRDIAEGLHYIHKSFLRHHGNLRSATCLVNDSWQVKLADFGLQFLQDEEEKPFKKNMLWAAPEVIRGSLSIEQMDSSADIYSFAIVASEILTKREAWDLSRRKEGYEEIKYAVKKGGQFVLRPDLHIDIEVNQTLLALVKDCWCENPEERPSAENVCKVLFDMTPNTEDNLMDHVFSMLEEYTSSLEVEVGERTKELTLEKKKSDILLGRMLPKQVAERLKAGQAVEPESFDLVTVFFSDLVKFTDLASKCSPFQVVNLLNDVFSNFDSIIEKHDVYKVESIGDGFLCVSGLPNRNGMEHIRQIVGMSLCFMEFCRNFRIPHLPRERVELRVGINSGPCVAGVVGLSMPRYCLFGDTVNTASRMESNGKPSMIHMSEAAHSLLVNNYPYQFETNSRGEVIIKGKGVMETYWLLGKMSLSNQSTPPITKVNHKPRKIASFTDSELTNYSFRSVSPYVENLSDNDDEEIRRVLRREMMRVEV.

A signal peptide spans 1–21 (MRQLNYYIFISTILTYNLTHG). Topologically, residues 22–485 (QGPRPVIRVG…CPLPIFEQYR (464 aa)) are extracellular. 7 N-linked (GlcNAc...) asparagine glycosylation sites follow: asparagine 40, asparagine 194, asparagine 252, asparagine 351, asparagine 377, asparagine 386, and asparagine 438. A helical transmembrane segment spans residues 486–506 (ALVIVAIAVTILILLAIIICM). At 507-1136 (SSKIRNRRVE…LRREMMRVEV (630 aa)) the chain is on the cytoplasmic side. One can recognise a Protein kinase domain in the interval 533-833 (LPMHRRASKS…EDNLMDHVFS (301 aa)). The interval 536-565 (HRRASKSSQESETESASETENFTSKSGDTM) is disordered. One can recognise a Guanylate cyclase domain in the interval 891 to 1021 (TVFFSDLVKF…DTVNTASRME (131 aa)).

The protein belongs to the adenylyl cyclase class-4/guanylyl cyclase family. Expression is biased toward ASE right (ASER) sensory neuron.

The protein resides in the cell membrane. It carries out the reaction GTP = 3',5'-cyclic GMP + diphosphate. Functionally, guanylate cyclase involved in the production of the second messenger cGMP. Regulates chemotaxis responses toward Br(1-) and I(1-) salt ions in ASE right (ASER) sensory neuron. This chain is Receptor-type guanylate cyclase gcy-4, found in Caenorhabditis elegans.